Consider the following 150-residue polypeptide: Endoribonuclease YbeY (150 aa).

Positions 108, 112, and 118 each coordinate Zn(2+).

This sequence belongs to the endoribonuclease YbeY family. Zn(2+) serves as cofactor.

Its subcellular location is the cytoplasm. Single strand-specific metallo-endoribonuclease involved in late-stage 70S ribosome quality control and in maturation of the 3' terminus of the 16S rRNA. The polypeptide is Endoribonuclease YbeY (Methylococcus capsulatus (strain ATCC 33009 / NCIMB 11132 / Bath)).